Consider the following 372-residue polypeptide: MTALNHTPLNAAHRALNARMVDFGGWDMPVNYGSQIEEHAAVRTDAGMFDVSHMCVVDFTGSRVRAFFEHAIANHVGKLKTPGKALYSCLLNPQGGVIDDLIVYYFTEEFFRVVVNAGTAEKDIAWFNQLNKQGGYGLTIAPRRDFAIVAVQGPNAREKVWATVPAARAATSELKPFNAAQVAGTPFGDLTIARTGYTGEDGFEVIVPAVHVEVLWNALQQHGVRPCGLGARDTLRLEAGMNLYGQDMDDTVSPLDAGLAWTVDLTAPRDFVGRAALEANGTRAAFVGLILQKENGKAGGVLRAHQKVVTPHGEGEITSGTFSPSMQESIAFARVPAAVQVGDIVQVQIRDKNLPARVVKLPFVRNGKVLAA.

The protein belongs to the GcvT family. In terms of assembly, the glycine cleavage system is composed of four proteins: P, T, L and H.

It carries out the reaction N(6)-[(R)-S(8)-aminomethyldihydrolipoyl]-L-lysyl-[protein] + (6S)-5,6,7,8-tetrahydrofolate = N(6)-[(R)-dihydrolipoyl]-L-lysyl-[protein] + (6R)-5,10-methylene-5,6,7,8-tetrahydrofolate + NH4(+). In terms of biological role, the glycine cleavage system catalyzes the degradation of glycine. This chain is Aminomethyltransferase, found in Burkholderia orbicola (strain MC0-3).